The sequence spans 103 residues: NADH-quinone oxidoreductase subunit K 2 (103 aa).

Helical transmembrane passes span 7–27 (LAWY…GFMI), 31–51 (IITI…TFVA), and 63–83 (IFVF…LGII).

Belongs to the complex I subunit 4L family. In terms of assembly, NDH-1 is composed of 14 different subunits. Subunits NuoA, H, J, K, L, M, N constitute the membrane sector of the complex.

The protein resides in the cell inner membrane. The enzyme catalyses a quinone + NADH + 5 H(+)(in) = a quinol + NAD(+) + 4 H(+)(out). Its function is as follows. NDH-1 shuttles electrons from NADH, via FMN and iron-sulfur (Fe-S) centers, to quinones in the respiratory chain. The immediate electron acceptor for the enzyme in this species is believed to be ubiquinone. Couples the redox reaction to proton translocation (for every two electrons transferred, four hydrogen ions are translocated across the cytoplasmic membrane), and thus conserves the redox energy in a proton gradient. The protein is NADH-quinone oxidoreductase subunit K 2 of Koribacter versatilis (strain Ellin345).